Consider the following 497-residue polypeptide: Probable cytosol aminopeptidase (497 aa).

Mn(2+) contacts are provided by Lys263 and Asp268. Lys275 is an active-site residue. Asp286, Asp345, and Glu347 together coordinate Mn(2+). Arg349 is an active-site residue.

The protein belongs to the peptidase M17 family. Mn(2+) is required as a cofactor.

It localises to the cytoplasm. The enzyme catalyses Release of an N-terminal amino acid, Xaa-|-Yaa-, in which Xaa is preferably Leu, but may be other amino acids including Pro although not Arg or Lys, and Yaa may be Pro. Amino acid amides and methyl esters are also readily hydrolyzed, but rates on arylamides are exceedingly low.. The catalysed reaction is Release of an N-terminal amino acid, preferentially leucine, but not glutamic or aspartic acids.. Its function is as follows. Presumably involved in the processing and regular turnover of intracellular proteins. Catalyzes the removal of unsubstituted N-terminal amino acids from various peptides. This Agrobacterium fabrum (strain C58 / ATCC 33970) (Agrobacterium tumefaciens (strain C58)) protein is Probable cytosol aminopeptidase.